Consider the following 201-residue polypeptide: Superoxide dismutase [Mn] (201 aa).

Mn(2+)-binding residues include histidine 27, histidine 81, aspartate 163, and histidine 167.

It belongs to the iron/manganese superoxide dismutase family. In terms of assembly, homodimer. Mn(2+) serves as cofactor.

The protein localises to the secreted. The enzyme catalyses 2 superoxide + 2 H(+) = H2O2 + O2. Destroys superoxide anion radicals which are normally produced within the cells and which are toxic to biological systems. The polypeptide is Superoxide dismutase [Mn] (sodA) (Streptococcus pyogenes).